We begin with the raw amino-acid sequence, 504 residues long: Sugar transport protein 14 (504 aa).

Over 1-25 (MAGGALTDEGGLKRAHLYEHRITSY) the chain is Cytoplasmic. 12 helical membrane-spanning segments follow: residues 26–46 (FIFA…DLGV), 84–104 (ILTL…FGAS), 121–141 (VSFF…MLIL), 144–164 (IFLG…LSEM), 171–191 (GTVN…ANLI), 205–225 (LSLG…LVLP), 286–308 (LVIG…ILFY), 315–337 (SLGF…LVVA), 352–372 (FLLL…GVTL), 382–402 (LPKS…LAYG), 428–448 (VVVC…LVSL), and 454–474 (GIFL…YFLL). Residues 475–504 (PETKQVPIEEVYLLWRQHWLWKKYVEDVDE) are Cytoplasmic-facing.

The protein belongs to the major facilitator superfamily. Sugar transporter (TC 2.A.1.1) family.

It is found in the membrane. Functionally, mediates an active uptake of hexoses, probably by sugar/hydrogen symport. The polypeptide is Sugar transport protein 14 (STP14) (Arabidopsis thaliana (Mouse-ear cress)).